Consider the following 199-residue polypeptide: Recombination protein RecR (199 aa).

A C4-type zinc finger spans residues cysteine 56–cysteine 71. Residues serine 79–proline 174 form the Toprim domain.

The protein belongs to the RecR family.

May play a role in DNA repair. It seems to be involved in an RecBC-independent recombinational process of DNA repair. It may act with RecF and RecO. The chain is Recombination protein RecR from Streptomyces avermitilis (strain ATCC 31267 / DSM 46492 / JCM 5070 / NBRC 14893 / NCIMB 12804 / NRRL 8165 / MA-4680).